A 418-amino-acid chain; its full sequence is MTAHTNSPRIMVIGTGDTKSDELLFMADVIERAGGSPVMIDVSILGNPPYEPAYSKHDVAEAAGTTVQAIIDSGDEHSAMALMAEGATALVRGLSQRGQVDGMIALGGSLGTDLALDIAAILPLVVPKFIVSTIAYSHLLPPERIAPDLMMILWAGGLYGLNPICRSVLSQACGAVVGAAKLVEKPSAEKPLIGMTHLGSSCLKYMRFLKPELEKRGYDVAIFHATGMGGRAYEAVAAQKGFVAVFDFCIQEVTNAESGSVVTSGPDRMENAGRAGIPQIIAPGAVDMVDMPAWQNVPEQFRDRPYHAHNRLIASITVSPEQRRAVARVVAAKLERAAAPVAFILPTGGVQEWDRNGEPLHEPEALGAFLDEMRGAVSGTITFEEVDAHINAPEFASRALAVFDRWVAEGIVVKGNVA.

The protein belongs to the UPF0261 family.

The protein is UPF0261 protein BMEII0128 of Brucella melitensis biotype 1 (strain ATCC 23456 / CCUG 17765 / NCTC 10094 / 16M).